Reading from the N-terminus, the 790-residue chain is Lon protease (790 aa).

Residues 13–209 (LPLFPIRNTV…RLTDHVAKEI (197 aa)) form the Lon N-terminal domain. 362-369 (GPPGVGKT) contributes to the ATP binding site. Residues 598 to 779 (DNQVGITIGL…DQVLDIALAT (182 aa)) form the Lon proteolytic domain. Residues S685 and K728 contribute to the active site.

It belongs to the peptidase S16 family. As to quaternary structure, homohexamer. Organized in a ring with a central cavity.

The protein localises to the cytoplasm. It carries out the reaction Hydrolysis of proteins in presence of ATP.. Functionally, ATP-dependent serine protease that mediates the selective degradation of mutant and abnormal proteins as well as certain short-lived regulatory proteins. Required for cellular homeostasis and for survival from DNA damage and developmental changes induced by stress. Degrades polypeptides processively to yield small peptide fragments that are 5 to 10 amino acids long. Binds to DNA in a double-stranded, site-specific manner. The polypeptide is Lon protease (Orientia tsutsugamushi (strain Ikeda) (Rickettsia tsutsugamushi)).